Reading from the N-terminus, the 155-residue chain is Endoribonuclease YbeY (155 aa).

Zn(2+)-binding residues include H120, H124, and H130.

This sequence belongs to the endoribonuclease YbeY family. It depends on Zn(2+) as a cofactor.

It localises to the cytoplasm. Single strand-specific metallo-endoribonuclease involved in late-stage 70S ribosome quality control and in maturation of the 3' terminus of the 16S rRNA. The sequence is that of Endoribonuclease YbeY from Staphylococcus epidermidis (strain ATCC 35984 / DSM 28319 / BCRC 17069 / CCUG 31568 / BM 3577 / RP62A).